Consider the following 128-residue polypeptide: MARIAGVDLPREKRIEVSLQYIYGIGKTSAKLILERANVSPVTRTKDLTDDEVRRIRETIEQNVKVEGDLRREISLNVKRLMDLGCYRGLRHRKGLPVRGQRTHTNARTRKGPKKGLVRKAAAPAPMA.

A compositionally biased stretch (basic residues) spans 95–118; sequence GLPVRGQRTHTNARTRKGPKKGLV. The disordered stretch occupies residues 95–128; it reads GLPVRGQRTHTNARTRKGPKKGLVRKAAAPAPMA.

The protein belongs to the universal ribosomal protein uS13 family. As to quaternary structure, part of the 30S ribosomal subunit. Forms a loose heterodimer with protein S19. Forms two bridges to the 50S subunit in the 70S ribosome.

Located at the top of the head of the 30S subunit, it contacts several helices of the 16S rRNA. In the 70S ribosome it contacts the 23S rRNA (bridge B1a) and protein L5 of the 50S subunit (bridge B1b), connecting the 2 subunits; these bridges are implicated in subunit movement. Contacts the tRNAs in the A and P-sites. The polypeptide is Small ribosomal subunit protein uS13 (Anaeromyxobacter dehalogenans (strain 2CP-1 / ATCC BAA-258)).